Consider the following 186-residue polypeptide: Ribosome maturation factor RimP (186 aa).

It belongs to the RimP family.

It localises to the cytoplasm. In terms of biological role, required for maturation of 30S ribosomal subunits. The polypeptide is Ribosome maturation factor RimP (Rhizorhabdus wittichii (strain DSM 6014 / CCUG 31198 / JCM 15750 / NBRC 105917 / EY 4224 / RW1) (Sphingomonas wittichii)).